Consider the following 123-residue polypeptide: EVKLVESGGGLVQPGGSLRLSCATSGFTFSDFYMEWVRQPPGKRLEWIAASRNKANDYTTEYSASVKGRFIVSRDTSQSILYLQMNALRAEDTAIYYCARDYYGBSYWYFDVWGAGTTVTVSS.

Residues 1-114 (EVKLVESGGG…BSYWYFDVWG (114 aa)) enclose the Ig-like domain.

The protein is Ig heavy chain V region H8 of Mus musculus (Mouse).